Reading from the N-terminus, the 1076-residue chain is Carbamoyl phosphate synthase large chain (1076 aa).

A carboxyphosphate synthetic domain region spans residues 1–402 (MPKREDIRKI…ALQKAIRSLE (402 aa)). The ATP site is built by Arg129, Arg169, Gly175, Gly176, Glu208, Val210, Glu215, Gly241, Val242, His243, Gln285, and Glu299. An ATP-grasp 1 domain is found at 133–328 (KEAMRKIGLD…IAKIAAKLAV (196 aa)). 3 residues coordinate Mg(2+): Gln285, Glu299, and Asn301. Mn(2+) contacts are provided by Gln285, Glu299, and Asn301. An oligomerization domain region spans residues 403-555 (IGRYGLGCDG…YSTYEDENEA (153 aa)). Residues 556-939 (LRSERKKVMI…YKAELAAGMK (384 aa)) are carbamoyl phosphate synthetic domain. An ATP-grasp 2 domain is found at 680–871 (AELLERLNIP…LAKIAAKLMM (192 aa)). ATP contacts are provided by Arg716, Lys755, Leu757, Glu762, Gly787, Val788, His789, Ser790, Gln830, and Glu842. Mg(2+) contacts are provided by Gln830, Glu842, and Asn844. 3 residues coordinate Mn(2+): Gln830, Glu842, and Asn844. The 139-residue stretch at 938-1076 (MKLPLKGTVF…KSIQEYHEES (139 aa)) folds into the MGS-like domain. The segment at 940-1076 (LPLKGTVFIS…KSIQEYHEES (137 aa)) is allosteric domain.

The protein belongs to the CarB family. Composed of two chains; the small (or glutamine) chain promotes the hydrolysis of glutamine to ammonia, which is used by the large (or ammonia) chain to synthesize carbamoyl phosphate. Tetramer of heterodimers (alpha,beta)4. Mg(2+) is required as a cofactor. Requires Mn(2+) as cofactor.

It catalyses the reaction hydrogencarbonate + L-glutamine + 2 ATP + H2O = carbamoyl phosphate + L-glutamate + 2 ADP + phosphate + 2 H(+). It carries out the reaction hydrogencarbonate + NH4(+) + 2 ATP = carbamoyl phosphate + 2 ADP + phosphate + 2 H(+). Its pathway is amino-acid biosynthesis; L-arginine biosynthesis; carbamoyl phosphate from bicarbonate: step 1/1. It functions in the pathway pyrimidine metabolism; UMP biosynthesis via de novo pathway; (S)-dihydroorotate from bicarbonate: step 1/3. Its function is as follows. Large subunit of the glutamine-dependent carbamoyl phosphate synthetase (CPSase). CPSase catalyzes the formation of carbamoyl phosphate from the ammonia moiety of glutamine, carbonate, and phosphate donated by ATP, constituting the first step of 2 biosynthetic pathways, one leading to arginine and/or urea and the other to pyrimidine nucleotides. The large subunit (synthetase) binds the substrates ammonia (free or transferred from glutamine from the small subunit), hydrogencarbonate and ATP and carries out an ATP-coupled ligase reaction, activating hydrogencarbonate by forming carboxy phosphate which reacts with ammonia to form carbamoyl phosphate. This chain is Carbamoyl phosphate synthase large chain, found in Archaeoglobus fulgidus (strain ATCC 49558 / DSM 4304 / JCM 9628 / NBRC 100126 / VC-16).